Reading from the N-terminus, the 207-residue chain is MLVFKGKLKEHPRWEVENELYRFRNRVFSDRLGWDVESHRGLEQDSFDTPDTHWVLIEDEEGLCGCIRLLSCAKDYMLPSIFPTALAGEAPPRSNDVWELTRLAIDAERAPRLGNGISELTCIIFREVYAFAKAQGIRELVAVVSLPVERIFRRLGLPIERLGHRQAVDLGAVRGVGIRFHLDERFARAVGQPLQGAYDEARELVTE.

Belongs to the autoinducer synthase family.

The catalysed reaction is a fatty acyl-[ACP] + S-adenosyl-L-methionine = an N-acyl-L-homoserine lactone + S-methyl-5'-thioadenosine + holo-[ACP] + H(+). In terms of biological role, required for the synthesis of N-butanoyl-L-homoserine lactone (BHL), an autoinducer molecule which binds to AhyR. This is Acyl-homoserine-lactone synthase (ahyI) from Aeromonas hydrophila.